The sequence spans 469 residues: MSAANMPAGFTDYKVADISLAAWGRRETIIAESEMPALMGLRRKYLTEQPLKGAKILGCIHMTIQTAVLIETLVALGAEVRWSSCNIFSTQDQAAASIAAAGIPVFAWKGETEEEYEWCLEQTILKDGQPWDANMILDDGGDLTELLHKKYPQVLDRVHGVTEETTTGVHRLLDMLAKGELKVPAINVNDSVTKSKNDNKYGCRHSLNDAIKRGTDHLLSGKQALVIGYGDVGKGSAQSLRQEGMIVKVTEVDPICAMQACMDGFELVSPFIDGINDGTEASIDKALLGKIDLIVTTTGNVNVCDANMLKALKKRAVVCNIGHFDNEIDTAFMRKNWAWEEVKPQVHKIHRTGAGSFDPQNDDYLILLAEGRLVNLGNATGHPSRIMDGSFANQVLAQIFLFEQKYADLSAEKKAERLTVEVLPKKLDEEVALEMVRGFGGVVTKLTKQQADYIGVTVEGPFKPHAYRY.

Residues threonine 63, aspartate 139, and glutamate 164 each coordinate substrate. 165–167 provides a ligand contact to NAD(+); the sequence is TTT. 2 residues coordinate substrate: lysine 194 and aspartate 198. NAD(+)-binding positions include asparagine 199, 228 to 233, glutamate 251, asparagine 300, 321 to 323, and asparagine 375; these read GYGDVG and IGH.

This sequence belongs to the adenosylhomocysteinase family. NAD(+) is required as a cofactor.

The protein resides in the cytoplasm. The catalysed reaction is S-adenosyl-L-homocysteine + H2O = L-homocysteine + adenosine. Its pathway is amino-acid biosynthesis; L-homocysteine biosynthesis; L-homocysteine from S-adenosyl-L-homocysteine: step 1/1. Functionally, may play a key role in the regulation of the intracellular concentration of adenosylhomocysteine. In Pseudomonas putida (strain GB-1), this protein is Adenosylhomocysteinase.